Here is a 437-residue protein sequence, read N- to C-terminus: Perilipin-2 (437 aa).

An N-acetylalanine modification is found at alanine 2. The residue at position 215 (serine 215) is a Phosphoserine. Residue tyrosine 232 is modified to Phosphotyrosine. A disordered region spans residues 412–437; sequence SQNAQDQGAEMDKSSQETQRSEHKTH. A compositionally biased stretch (basic and acidic residues) spans 421–437; it reads EMDKSSQETQRSEHKTH.

This sequence belongs to the perilipin family. As to quaternary structure, interacts with IRGC. In terms of processing, acylated; primarily with C14, C16 and C18 fatty acids. Post-translationally, phosphorylation at Tyr-232 by isoform 1 of CHKA (CHKalpha2) promotes dissociation from lipid droplets: dissociation is followed by recruitment of autophagosome machinery to lipid droplets and subsequent lipid droplet lipolysis. Polyubiquitination of Nt-acetylatable A-PLIN2 by MARCHF6 lead to degradation by 26S proteasomes. As to expression, milk lipid globules.

The protein resides in the membrane. The protein localises to the lipid droplet. Its function is as follows. Structural component of lipid droplets, which is required for the formation and maintenance of lipid storage droplets. This Homo sapiens (Human) protein is Perilipin-2.